Consider the following 274-residue polypeptide: ATP synthase subunit a (274 aa).

5 consecutive transmembrane segments (helical) span residues 43 to 63, 103 to 123, 144 to 164, 223 to 243, and 245 to 265; these read TLNIDSLFFSVVLGILFLYVF, VIAPLALTVFVWVLLMNVMDL, VVPTADVSVTLSMAIGVFVLI, LIFILIAGLLPWWSQWLLSLP, and AIFHILIITLQAFIFMVLTIV.

The protein belongs to the ATPase A chain family. In terms of assembly, F-type ATPases have 2 components, CF(1) - the catalytic core - and CF(0) - the membrane proton channel. CF(1) has five subunits: alpha(3), beta(3), gamma(1), delta(1), epsilon(1). CF(0) has three main subunits: a(1), b(2) and c(9-12). The alpha and beta chains form an alternating ring which encloses part of the gamma chain. CF(1) is attached to CF(0) by a central stalk formed by the gamma and epsilon chains, while a peripheral stalk is formed by the delta and b chains.

It localises to the cell inner membrane. Functionally, key component of the proton channel; it plays a direct role in the translocation of protons across the membrane. The sequence is that of ATP synthase subunit a from Photorhabdus laumondii subsp. laumondii (strain DSM 15139 / CIP 105565 / TT01) (Photorhabdus luminescens subsp. laumondii).